The sequence spans 877 residues: Alanine--tRNA ligase (877 aa).

Residues His-565, His-569, Cys-667, and His-671 each contribute to the Zn(2+) site.

It belongs to the class-II aminoacyl-tRNA synthetase family. Zn(2+) serves as cofactor.

The protein resides in the cytoplasm. It carries out the reaction tRNA(Ala) + L-alanine + ATP = L-alanyl-tRNA(Ala) + AMP + diphosphate. Its function is as follows. Catalyzes the attachment of alanine to tRNA(Ala) in a two-step reaction: alanine is first activated by ATP to form Ala-AMP and then transferred to the acceptor end of tRNA(Ala). Also edits incorrectly charged Ser-tRNA(Ala) and Gly-tRNA(Ala) via its editing domain. The sequence is that of Alanine--tRNA ligase from Acidithiobacillus ferridurans.